A 221-amino-acid polypeptide reads, in one-letter code: UPF0502 protein PSPA7_1674 (221 aa).

This sequence belongs to the UPF0502 family.

This chain is UPF0502 protein PSPA7_1674, found in Pseudomonas paraeruginosa (strain DSM 24068 / PA7) (Pseudomonas aeruginosa (strain PA7)).